Reading from the N-terminus, the 1049-residue chain is MSCQKAVLELNIGSQLGPKSPERTEGVTAFEDYGTGLLENQLSVGDFVKIQKAFESPQPRKIICMSREDFTQKMTEIVGWGTKEEYGELFDKVDVAQDGFINWDKLTSFILLELYEQDERAKATVVPQWKDLEFLPVKHKDTIQKVIFLKNSSHYLTISKEGLLAIWGEHLKLQETFPITSDATKLKHLWVTSLVSLENVNKIAVAFTSKEVCFYDLLSKEEFACQYKLQGLKGTPICMDYWYDPLDANESILSFGDITGKVQAIAFTAALISLFERPASACEDGEATMTINWAELLSGCHKCCHILEHKLHQGDWVRQVTYNASLDAIISSTTSNTNSVVMAWREKSKKRLNMTSFNIAQGIHAFDYHSRLNLIATAGINNKVCLWNPYVVSKPVGVLWGHSASVIAVQFFVERKQLFSFSKDKVLRLWDIQHQLSIQRIACSFPKSQDFRCLFHFDEAHGRLFISFNNQLALLAMKSEASKRVKSHEKAVTCVLYNSILKQVISSDTGSTVSFWMIDTGQKIKQFTGCHGNAEISTMALDANETRLLTGSTDGTVKIWDFNGYCHHTLNVGQDGAVDISQILILKKKILVTGWERYDYASWKTIGRAITVFRPQNFNQFFIQPEEWKGGIQHHDDILCAAFLPPQTLVTGSYDGEIVLWNNSTENAHHVLHPDYQRLLKSKLDTKPQKLLSAGRSQPSHPMADHSTTGVRNFEIDTEGKNAVMRLCFLKARKNTAVTGGANLVSCGGSGYVRFWDIYKKQLLAEFLAHSGVGSIIMSTDKMNRYLTTGDLDGWLKIWNIEEYCLNSSKNKITKAPTLIRSFQPHEDRISSLEMCEPGGQLLIISSSADCSICVTGVCNAPVWIFGQAKHWHIENCLFLPKRDTNLVESEIQKEISLFSKEESCLDPTEHSLLNKKNKDDSTYNVRPSEDINLDIKYKERSTCMKETQKPYYGEVIKKSFSTFRSLNIGALEELPEVNKPAFLLDPEKYFRKEPEEERPQILEAPSLFKTLKAVFDEKNLFPKEILHHERKAKQLCQEKSCEVKKNKK.

One can recognise an EF-hand domain in the interval 81–116 (GTKEEYGELFDKVDVAQDGFINWDKLTSFILLELYE). WD repeat units lie at residues 138-177 (KHKD…QETF), 358-397 (NIAQ…KPVG), 401-440 (GHSA…SIQR), 487-528 (SHEK…KQFT), 531-570 (HGNA…HHTL), and 633-671 (QHHD…AHHV). The segment at 691–712 (LLSAGRSQPSHPMADHSTTGVR) is disordered. Polar residues predominate over residues 695 to 711 (GRSQPSHPMADHSTTGV). WD repeat units follow at residues 719–766 (EGKN…LLAE), 769–809 (AHSG…LNSS), and 825–866 (PHED…VWIF).

It belongs to the CFAP337 family. Associates with components of the nexin-dynein regulatory complex (N-DRC) and the CFAP184:CFAP263 complex.

The protein resides in the cell projection. It localises to the cilium. Associates with components of the nexin-dynein regulatory complex (N-DRC), a key regulator of ciliary/flagellar motility, and might act as an inner dynein arm (IDA) hub or linkage. The polypeptide is Cilia- and flagella-associated protein 337 (Homo sapiens (Human)).